Here is a 108-residue protein sequence, read N- to C-terminus: Transcriptional activator HlyU (108 aa).

The HTH arsR-type domain maps to 13–107 (EMEKNSAKAV…LLHRLYCQAN (95 aa)). A DNA-binding region (H-T-H motif) is located at residues 47–66 (VGELSSRLELSQSALSQHLA).

In terms of biological role, up-regulates the expression of the hemolysin gene, hlyA, and may promote expression of other virulence determinants in vivo. It may have both positive and negative regulator activities. The chain is Transcriptional activator HlyU (hlyU) from Vibrio cholerae serotype O1 (strain ATCC 39315 / El Tor Inaba N16961).